An 89-amino-acid polypeptide reads, in one-letter code: Putative defensin-like protein 89 (89 aa).

Positions 1–25 (MGFKNNLSLVSVMVFALILLPMISG) are cleaved as a signal peptide. 4 disulfides stabilise this stretch: C30-C66, C36-C57, C42-C64, and C46-C65.

Belongs to the DEFL family.

It localises to the secreted. This Arabidopsis thaliana (Mouse-ear cress) protein is Putative defensin-like protein 89.